Consider the following 96-residue polypeptide: Aspartyl/glutamyl-tRNA(Asn/Gln) amidotransferase subunit C (96 aa).

This sequence belongs to the GatC family. Heterotrimer of A, B and C subunits.

The enzyme catalyses L-glutamyl-tRNA(Gln) + L-glutamine + ATP + H2O = L-glutaminyl-tRNA(Gln) + L-glutamate + ADP + phosphate + H(+). It carries out the reaction L-aspartyl-tRNA(Asn) + L-glutamine + ATP + H2O = L-asparaginyl-tRNA(Asn) + L-glutamate + ADP + phosphate + 2 H(+). Functionally, allows the formation of correctly charged Asn-tRNA(Asn) or Gln-tRNA(Gln) through the transamidation of misacylated Asp-tRNA(Asn) or Glu-tRNA(Gln) in organisms which lack either or both of asparaginyl-tRNA or glutaminyl-tRNA synthetases. The reaction takes place in the presence of glutamine and ATP through an activated phospho-Asp-tRNA(Asn) or phospho-Glu-tRNA(Gln). The sequence is that of Aspartyl/glutamyl-tRNA(Asn/Gln) amidotransferase subunit C from Deinococcus deserti (strain DSM 17065 / CIP 109153 / LMG 22923 / VCD115).